A 39-amino-acid chain; its full sequence is U2-ctenitoxin-Co1a (39 aa).

Disulfide bonds are present. Expressed by the venom gland.

Its subcellular location is the secreted. Its function is as follows. Omega-agatoxins are antagonists of voltage-gated calcium channels (Cav). In Ctenus ornatus (Brazilian spider), this protein is U2-ctenitoxin-Co1a.